The chain runs to 214 residues: Oocyte zinc finger protein XlCOF10 (214 aa).

7 consecutive C2H2-type zinc fingers follow at residues 1–23 (FSCS…RQLH), 29–51 (FTCS…HRIH), 57–79 (FTCD…QKSH), 85–107 (FCCS…QRTH), 113–135 (FTCT…QKSH), 141–163 (FSCS…QRIH), and 169–191 (FSCS…EKCH).

This sequence belongs to the krueppel C2H2-type zinc-finger protein family.

It is found in the nucleus. In terms of biological role, may be involved in transcriptional regulation. The sequence is that of Oocyte zinc finger protein XlCOF10 from Xenopus laevis (African clawed frog).